The primary structure comprises 136 residues: Late embryogenesis abundant protein D-7 (136 aa).

Disordered regions lie at residues 1–108 (MASH…AQGA) and 117–136 (GMAD…TRKD). Basic and acidic residues predominate over residues 11 to 58 (GRAEGRAHEKGEQMKESMKEKAEAAKQKTMETAEAAKQKTMETAEAAK). LEA 11-mer repeat repeat units follow at residues 31-41 (KAEAAKQKTME), 42-52 (TAEAAKQKTME), 53-63 (TAEAAKQKTRG), 64-74 (AAETTNDKTKQ), and 75-85 (TAGAARGKAEE).

It belongs to the LEA type 4 family.

Its function is as follows. LEA proteins are late embryonic proteins abundant in higher plant seed embryos. There are two subsets of LEA proteins (5a and 5b), the first ones are expressed when the cotyledon weight reach 80 mg and the second set are expressed above 100 mg. The function of those proteins is not known. This chain is Late embryogenesis abundant protein D-7, found in Gossypium hirsutum (Upland cotton).